The chain runs to 362 residues: NAD(P)H-quinone oxidoreductase subunit 1, chloroplastic (362 aa).

8 consecutive transmembrane segments (helical) span residues 27–47 (IWILPILALLLGITIEVLVIV), 103–123 (IAVISILLSFLVIPLGYHFVL), 128–148 (IGVFLWIAISSIAPIGLLMAG), 164–184 (AAQSISYEIPLTFCVLAISLL), 202–222 (FFGWNLWRQPIGFLVFLISSL), 247–267 (YSGIKYGLFYLVSYLNLLVSS), 303–323 (VIGIFITLTKAYLFLFISITI), and 342–362 (FLLPISLGNLLLTTSFQLVSL).

Belongs to the complex I subunit 1 family. As to quaternary structure, NDH is composed of at least 16 different subunits, 5 of which are encoded in the nucleus.

The protein resides in the plastid. It localises to the chloroplast thylakoid membrane. It catalyses the reaction a plastoquinone + NADH + (n+1) H(+)(in) = a plastoquinol + NAD(+) + n H(+)(out). The enzyme catalyses a plastoquinone + NADPH + (n+1) H(+)(in) = a plastoquinol + NADP(+) + n H(+)(out). Its function is as follows. NDH shuttles electrons from NAD(P)H:plastoquinone, via FMN and iron-sulfur (Fe-S) centers, to quinones in the photosynthetic chain and possibly in a chloroplast respiratory chain. The immediate electron acceptor for the enzyme in this species is believed to be plastoquinone. Couples the redox reaction to proton translocation, and thus conserves the redox energy in a proton gradient. This is NAD(P)H-quinone oxidoreductase subunit 1, chloroplastic from Saccharum hybrid (Sugarcane).